Consider the following 337-residue polypeptide: Equatorin (337 aa).

The N-terminal stretch at 1–20 (MDFILLIILSGVFLPDIISL) is a signal peptide. The Lumenal segment spans residues 21–183 (QPIVGQEPGV…LSELEEIKLK (163 aa)). The tract at residues 110–130 (SKPTASGEEEKPSESSRKTST) is disordered. Positions 117–126 (EEEKPSESSR) are enriched in basic and acidic residues. Asn145 is a glycosylation site (N-linked (GlcNAc...) asparagine). Residues 184 to 204 (LMLGISLMTLVLLIPLLIFCF) form a helical membrane-spanning segment. At 205 to 337 (ATLYKLRHLR…LLNKEGSPSN (133 aa)) the chain is on the cytoplasmic side. The segment at 259–283 (SSEMRRSRTRRSKSKPMDFSAGSNQ) is disordered. Phosphoserine is present on Ser336.

As to quaternary structure, interacts with SNAP25. Highly N- and O-glycosylated; contains sialic acid. MN9 epitope is O-glycosylated. Sperm specific, including germ cells (at protein level).

The protein resides in the cytoplasmic vesicle. It is found in the secretory vesicle. Its subcellular location is the acrosome membrane. The protein localises to the acrosome inner membrane. It localises to the acrosome outer membrane. The protein resides in the nucleus. It is found in the cytoplasm. Functionally, acrosomal membrane-anchored protein involved in the process of fertilization and in acrosome biogenesis. The chain is Equatorin (Eqtn) from Mus musculus (Mouse).